The chain runs to 60 residues: Large ribosomal subunit protein uL30 (60 aa).

Belongs to the universal ribosomal protein uL30 family. In terms of assembly, part of the 50S ribosomal subunit.

The chain is Large ribosomal subunit protein uL30 from Flavobacterium psychrophilum (strain ATCC 49511 / DSM 21280 / CIP 103535 / JIP02/86).